The following is a 587-amino-acid chain: Zinc finger protein 69 (587 aa).

Residues 42 to 128 form a disordered region; sequence NGTQQESLAD…TPGTTAAGSQ (87 aa). The KRAB domain maps to 76 to 147; sequence HDEATPGTPA…VDLSQEEWGQ (72 aa). 9 C2H2-type zinc fingers span residues 271-293, 299-321, 327-349, 355-377, 383-405, 411-433, 439-461, 467-489, and 495-517; these read HKKK…ILEQ, KPAR…CMRA, NVCE…HTGE, KECG…HTGE, EECG…HTGE, DKCQ…HSGE, SECG…HTGE, TSCC…HTGE, and KECG…HTGV. Residues 564–587 form a disordered region; that stretch reads SRHQKIHRRNTFRDDPGHENKRQL. Basic and acidic residues predominate over residues 574-587; the sequence is TFRDDPGHENKRQL.

It belongs to the krueppel C2H2-type zinc-finger protein family.

It localises to the nucleus. Putative transcription factor that appears to regulate lipid metabolism. The protein is Zinc finger protein 69 of Mus musculus (Mouse).